Here is a 495-residue protein sequence, read N- to C-terminus: 3-octaprenyl-4-hydroxybenzoate carboxy-lyase (495 aa).

Residue Asn-171 participates in Mn(2+) binding. Prenylated FMN-binding positions include 174–176 (IYR), 188–190 (RWL), and 193–194 (RG). Glu-237 is a Mn(2+) binding site. Asp-286 serves as the catalytic Proton donor.

Belongs to the UbiD family. In terms of assembly, homohexamer. Requires prenylated FMN as cofactor. It depends on Mn(2+) as a cofactor.

It localises to the cell membrane. It catalyses the reaction a 4-hydroxy-3-(all-trans-polyprenyl)benzoate + H(+) = a 2-(all-trans-polyprenyl)phenol + CO2. It functions in the pathway cofactor biosynthesis; ubiquinone biosynthesis. Functionally, catalyzes the decarboxylation of 3-octaprenyl-4-hydroxy benzoate to 2-octaprenylphenol, an intermediate step in ubiquinone biosynthesis. The polypeptide is 3-octaprenyl-4-hydroxybenzoate carboxy-lyase (Hamiltonella defensa subsp. Acyrthosiphon pisum (strain 5AT)).